The sequence spans 338 residues: MKFIDEVTLFASSGHGGAGCVAFRREKFIEFGGPNGGDGGKGGDVVFVAKAGLSSLLELRHRPHQKAEKGHNGQGKNRHGASGADLVIKVPVGTVISDAESGEQLADLAENGQRVVLLKGGRGGQGNARFASATHKTPRFAQPGEEGQEAKLRLELKLMADVGLLGLPNAGKSSLITKISAARPKIADYPFTTIKPSLGVVPYKNARSFVMADIPGIIEGAHEGAGLGHRFLKHLERSGILLHLVDISWMPERDPLAEYEAVTRELTMFSPELAAKEQVVVITKLDLPQTREKLAEIRSWFEERGIRVFPISSATGEGVGELLDEIARRLWGRIEEEW.

An Obg domain is found at 1 to 159 (MKFIDEVTLF…AKLRLELKLM (159 aa)). Residues 160-331 (ADVGLLGLPN…LLDEIARRLW (172 aa)) enclose the OBG-type G domain. GTP is bound by residues 166–173 (GLPNAGKS), 191–195 (FTTIK), 213–216 (DIPG), 283–286 (TKLD), and 312–314 (SSA). 2 residues coordinate Mg(2+): Ser-173 and Thr-193.

The protein belongs to the TRAFAC class OBG-HflX-like GTPase superfamily. OBG GTPase family. As to quaternary structure, monomer. Requires Mg(2+) as cofactor.

The protein localises to the cytoplasm. An essential GTPase which binds GTP, GDP and possibly (p)ppGpp with moderate affinity, with high nucleotide exchange rates and a fairly low GTP hydrolysis rate. Plays a role in control of the cell cycle, stress response, ribosome biogenesis and in those bacteria that undergo differentiation, in morphogenesis control. The chain is GTPase Obg from Pelobacter propionicus (strain DSM 2379 / NBRC 103807 / OttBd1).